Consider the following 273-residue polypeptide: Ribosomal RNA small subunit methyltransferase A (273 aa).

The S-adenosyl-L-methionine site is built by asparagine 18, leucine 20, glycine 45, glutamate 66, aspartate 91, and asparagine 113.

The protein belongs to the class I-like SAM-binding methyltransferase superfamily. rRNA adenine N(6)-methyltransferase family. RsmA subfamily.

It is found in the cytoplasm. The catalysed reaction is adenosine(1518)/adenosine(1519) in 16S rRNA + 4 S-adenosyl-L-methionine = N(6)-dimethyladenosine(1518)/N(6)-dimethyladenosine(1519) in 16S rRNA + 4 S-adenosyl-L-homocysteine + 4 H(+). Functionally, specifically dimethylates two adjacent adenosines (A1518 and A1519) in the loop of a conserved hairpin near the 3'-end of 16S rRNA in the 30S particle. May play a critical role in biogenesis of 30S subunits. This chain is Ribosomal RNA small subunit methyltransferase A, found in Klebsiella pneumoniae (strain 342).